An 874-amino-acid chain; its full sequence is Alanine--tRNA ligase (874 aa).

The Zn(2+) site is built by His-562, His-566, Cys-664, and His-668.

This sequence belongs to the class-II aminoacyl-tRNA synthetase family. Zn(2+) is required as a cofactor.

It is found in the cytoplasm. The catalysed reaction is tRNA(Ala) + L-alanine + ATP = L-alanyl-tRNA(Ala) + AMP + diphosphate. Functionally, catalyzes the attachment of alanine to tRNA(Ala) in a two-step reaction: alanine is first activated by ATP to form Ala-AMP and then transferred to the acceptor end of tRNA(Ala). Also edits incorrectly charged Ser-tRNA(Ala) and Gly-tRNA(Ala) via its editing domain. The polypeptide is Alanine--tRNA ligase (Neisseria gonorrhoeae (strain ATCC 700825 / FA 1090)).